We begin with the raw amino-acid sequence, 68 residues long: Cell division protein ZapB (68 aa).

Residues 3–58 (LELLSKLETKIQAALETIELLKMELEEEKQKNHTLNEQNQQLSQDLTSWNEKVTGL) are a coiled coil.

The protein belongs to the ZapB family. Homodimer. The ends of the coiled-coil dimer bind to each other, forming polymers. Interacts with FtsZ.

The protein localises to the cytoplasm. Non-essential, abundant cell division factor that is required for proper Z-ring formation. It is recruited early to the divisome by direct interaction with FtsZ, stimulating Z-ring assembly and thereby promoting cell division earlier in the cell cycle. Its recruitment to the Z-ring requires functional FtsA or ZipA. The sequence is that of Cell division protein ZapB from Shewanella loihica (strain ATCC BAA-1088 / PV-4).